Here is a 402-residue protein sequence, read N- to C-terminus: Adenylyltransferase and sulfurtransferase MOCS3 (402 aa).

Residues glycine 47, aspartate 68, 75 to 79 (DNLHR), lysine 92, and 136 to 137 (DN) contribute to the ATP site. Residues cysteine 178 and cysteine 181 each coordinate Zn(2+). Cysteine 195 serves as the catalytic Glycyl thioester intermediate; for adenylyltransferase activity. Residues cysteine 253 and cysteine 256 each coordinate Zn(2+). In terms of domain architecture, Rhodanese spans 303-400 (AARKQFLLDT…WALKINDEFP (98 aa)). Cysteine 359 acts as the Cysteine persulfide intermediate; for sulfurtransferase activity in catalysis.

It in the N-terminal section; belongs to the HesA/MoeB/ThiF family. UBA4 subfamily. The cofactor is Zn(2+).

It localises to the cytoplasm. It is found in the cytosol. The enzyme catalyses [molybdopterin-synthase sulfur-carrier protein]-C-terminal Gly-Gly + ATP + H(+) = [molybdopterin-synthase sulfur-carrier protein]-C-terminal Gly-Gly-AMP + diphosphate. It catalyses the reaction [molybdopterin-synthase sulfur-carrier protein]-C-terminal Gly-Gly-AMP + S-sulfanyl-L-cysteinyl-[cysteine desulfurase] + AH2 = [molybdopterin-synthase sulfur-carrier protein]-C-terminal-Gly-aminoethanethioate + L-cysteinyl-[cysteine desulfurase] + A + AMP + 2 H(+). The protein operates within tRNA modification; 5-methoxycarbonylmethyl-2-thiouridine-tRNA biosynthesis. It functions in the pathway cofactor biosynthesis; molybdopterin biosynthesis. Functionally, plays a central role in 2-thiolation of mcm(5)S(2)U at tRNA wobble positions of cytosolic tRNA(Lys), tRNA(Glu) and tRNA(Gln). Also essential during biosynthesis of the molybdenum cofactor. Acts by mediating the C-terminal thiocarboxylation of sulfur carriers URM1 and MOCS2A. Its N-terminus first activates URM1 and MOCS2A as acyl-adenylates (-COAMP), then the persulfide sulfur on the catalytic cysteine is transferred to URM1 and MOCS2A to form thiocarboxylation (-COSH) of their C-terminus. The reaction probably involves hydrogen sulfide that is generated from the persulfide intermediate and that acts as a nucleophile towards URM1 and MOCS2A. Subsequently, a transient disulfide bond is formed. Does not use thiosulfate as sulfur donor; NFS1 probably acting as a sulfur donor for thiocarboxylation reactions. This chain is Adenylyltransferase and sulfurtransferase MOCS3, found in Caenorhabditis briggsae.